The chain runs to 320 residues: Cytochrome f (320 aa).

Residues 1–35 (MQTINTFSWIKEQITRSISISLILYIITRSSIANA) form the signal peptide. 4 residues coordinate heme: Y36, C56, C59, and H60. Residues 286–305 (IQGLLFFFASVILAQIFLVL) traverse the membrane as a helical segment.

The protein belongs to the cytochrome f family. As to quaternary structure, the 4 large subunits of the cytochrome b6-f complex are cytochrome b6, subunit IV (17 kDa polypeptide, petD), cytochrome f and the Rieske protein, while the 4 small subunits are PetG, PetL, PetM and PetN. The complex functions as a dimer. It depends on heme as a cofactor.

It localises to the plastid. The protein localises to the chloroplast thylakoid membrane. Functionally, component of the cytochrome b6-f complex, which mediates electron transfer between photosystem II (PSII) and photosystem I (PSI), cyclic electron flow around PSI, and state transitions. The sequence is that of Cytochrome f (petA) from Spinacia oleracea (Spinach).